A 445-amino-acid polypeptide reads, in one-letter code: 3-phosphoshikimate 1-carboxyvinyltransferase (445 aa).

Positions 21, 22, and 26 each coordinate 3-phosphoshikimate. K21 is a phosphoenolpyruvate binding site. Phosphoenolpyruvate is bound by residues G92 and R120. 3-phosphoshikimate contacts are provided by S165, Q166, D307, and K334. Q166 lines the phosphoenolpyruvate pocket. D307 (proton acceptor) is an active-site residue. Residues R338, R379, and K405 each contribute to the phosphoenolpyruvate site.

Belongs to the EPSP synthase family. Monomer.

It localises to the cytoplasm. It catalyses the reaction 3-phosphoshikimate + phosphoenolpyruvate = 5-O-(1-carboxyvinyl)-3-phosphoshikimate + phosphate. Its pathway is metabolic intermediate biosynthesis; chorismate biosynthesis; chorismate from D-erythrose 4-phosphate and phosphoenolpyruvate: step 6/7. Catalyzes the transfer of the enolpyruvyl moiety of phosphoenolpyruvate (PEP) to the 5-hydroxyl of shikimate-3-phosphate (S3P) to produce enolpyruvyl shikimate-3-phosphate and inorganic phosphate. This Chlamydia pneumoniae (Chlamydophila pneumoniae) protein is 3-phosphoshikimate 1-carboxyvinyltransferase.